Here is a 767-residue protein sequence, read N- to C-terminus: 5-methyltetrahydropteroyltriglutamate--homocysteine methyltransferase (767 aa).

The 5-methyltetrahydropteroyltri-L-glutamate site is built by K19 and N126. L-homocysteine contacts are provided by residues I446–S448 and E499. Residues I446–S448 and E499 contribute to the L-methionine site. Residues D504, Y527, R530–Y531, and W576 each bind 5-methyltetrahydropteroyltri-L-glutamate. D614 is a binding site for L-homocysteine. Residue D614 coordinates L-methionine. 3 residues coordinate Zn(2+): H657, C659, and E679. H707 (proton donor) is an active-site residue. Zn(2+) is bound at residue C739.

It belongs to the vitamin-B12 independent methionine synthase family. Requires Zn(2+) as cofactor.

The enzyme catalyses 5-methyltetrahydropteroyltri-L-glutamate + L-homocysteine = tetrahydropteroyltri-L-glutamate + L-methionine. The protein operates within amino-acid biosynthesis; L-methionine biosynthesis via de novo pathway; L-methionine from L-homocysteine (MetE route): step 1/1. With respect to regulation, inhibited weakly by methotrexate. Functionally, catalyzes the transfer of a methyl group from 5-methyltetrahydrofolate to homocysteine resulting in methionine formation. The sequence is that of 5-methyltetrahydropteroyltriglutamate--homocysteine methyltransferase from Candida albicans (strain SC5314 / ATCC MYA-2876) (Yeast).